The sequence spans 127 residues: uncharacterized protein (127 aa).

4 consecutive transmembrane segments (helical) span residues Met1–Val21, Thr32–Phe52, Ala68–Val88, and Ile100–Lys120.

It belongs to the GtrA family.

Its subcellular location is the cell membrane. This is an uncharacterized protein from Bacillus subtilis (strain 168).